The chain runs to 328 residues: TSTSYPSIVGEMLASGFGVIGFSWICSPACTELEVVVMDWLAKFLKPPAHFQHASDGPGGGVIQGSASEAVLVAVLAAREQAVASYRESHPELSESEVRGRLVAYSSDQSNSCIEKAGVLAAMPIRLLPAGEDFVLRGDTLRGAIEEDVAAGRIPVICVATLGTTGTCAYDDIESLSAVCEEFKVWLHVDAAYAGGAFALEECSDLRKGLDRVDSLNFNLHKFMLVNFDCSAMWLRDANKVVDSFNVDRIYLKHKHEGQSQIPDFRHWQIPLGRRFRALKVWITFRTLGAEGLRNHVRKHIELAKQFEQLVLKDSRFELVAPSALGLV.

Residue N111 is part of the active site. K222 bears the N6-(pyridoxal phosphate)lysine mark.

This sequence belongs to the group II decarboxylase family. Pyridoxal 5'-phosphate is required as a cofactor.

The enzyme catalyses L-dopa + O2 + H2O + H(+) = 3,4-dihydroxyphenylacetaldehyde + H2O2 + NH4(+) + CO2. Its function is as follows. Catalyzes the decarboxylation-oxidative deamination of L-3,4-dihydroxyphenylalanine (L-DOPA) to 3,4-dihydroxylphenylacetaldehyde (DHPAA). Involved in cuticle development. Probably responsible for the protein cross-linking during the development of flexible cuticles. This Drosophila simulans (Fruit fly) protein is 3,4-dihydroxyphenylacetaldehyde synthase 2 (amd).